The primary structure comprises 346 residues: Dihydroorotase (346 aa).

Residues H17 and H19 each contribute to the Zn(2+) site. Residues 19–21 (HLR) and N45 contribute to the substrate site. Residues K103, H140, and H178 each coordinate Zn(2+). K103 is subject to N6-carboxylysine. H140 is a binding site for substrate. Substrate is bound at residue L223. D251 serves as a coordination point for Zn(2+). D251 is an active-site residue. Positions 255 and 267 each coordinate substrate.

This sequence belongs to the metallo-dependent hydrolases superfamily. DHOase family. Class II DHOase subfamily. Homodimer. Zn(2+) is required as a cofactor.

It carries out the reaction (S)-dihydroorotate + H2O = N-carbamoyl-L-aspartate + H(+). It participates in pyrimidine metabolism; UMP biosynthesis via de novo pathway; (S)-dihydroorotate from bicarbonate: step 3/3. In terms of biological role, catalyzes the reversible cyclization of carbamoyl aspartate to dihydroorotate. The polypeptide is Dihydroorotase (Synechococcus sp. (strain RCC307)).